A 448-amino-acid chain; its full sequence is Trigger factor (448 aa).

The 87-residue stretch at 167–253 (GSIVRVDFVE…LKDIKRRDIP (87 aa)) folds into the PPIase FKBP-type domain.

This sequence belongs to the FKBP-type PPIase family. Tig subfamily.

Its subcellular location is the cytoplasm. It carries out the reaction [protein]-peptidylproline (omega=180) = [protein]-peptidylproline (omega=0). Its function is as follows. Involved in protein export. Acts as a chaperone by maintaining the newly synthesized protein in an open conformation. Functions as a peptidyl-prolyl cis-trans isomerase. The polypeptide is Trigger factor (Borrelia turicatae (strain 91E135)).